The primary structure comprises 270 residues: tRNA pseudouridine synthase A (270 aa).

Catalysis depends on Asp60, which acts as the Nucleophile. Tyr118 is a substrate binding site.

It belongs to the tRNA pseudouridine synthase TruA family. As to quaternary structure, homodimer.

The enzyme catalyses uridine(38/39/40) in tRNA = pseudouridine(38/39/40) in tRNA. Formation of pseudouridine at positions 38, 39 and 40 in the anticodon stem and loop of transfer RNAs. The sequence is that of tRNA pseudouridine synthase A from Cronobacter sakazakii (strain ATCC BAA-894) (Enterobacter sakazakii).